The following is a 473-amino-acid chain: GTPase Der (473 aa).

2 consecutive EngA-type G domains span residues 3 to 166 (PVIA…ENPE) and 177 to 350 (IRIG…ESAM). Residues 9-16 (GRPNVGKS), 56-60 (DTGGL), 118-121 (NKTD), 183-190 (GRPNVGKS), 230-234 (DTAGV), and 295-298 (NKWD) each bind GTP. Residues 351–435 (SKWPTNRLTA…PIRFEFKSGE (85 aa)) enclose the KH-like domain. Residues 444–458 (RLTPRQKVKKDNDLK) are compositionally biased toward basic and acidic residues. Positions 444–473 (RLTPRQKVKKDNDLKKGRRIKKTRQKSVKR) are disordered. The span at 459-473 (KGRRIKKTRQKSVKR) shows a compositional bias: basic residues.

It belongs to the TRAFAC class TrmE-Era-EngA-EngB-Septin-like GTPase superfamily. EngA (Der) GTPase family. Associates with the 50S ribosomal subunit.

Its function is as follows. GTPase that plays an essential role in the late steps of ribosome biogenesis. The chain is GTPase Der from Marinobacter nauticus (strain ATCC 700491 / DSM 11845 / VT8) (Marinobacter aquaeolei).